The chain runs to 240 residues: Tetrahydromethanopterin S-methyltransferase subunit A (240 aa).

Topologically, residues 1–218 (MAEKREPAAG…KFHAGVHAGK (218 aa)) are cytoplasmic. Residue His-85 coordinates 5-hydroxybenzimidazolylcob(I)amide. The chain crosses the membrane as a helical span at residues 219–239 (FEGIMIGLAITLSLLGLILFG). Position 240 (Arg-240) is a topological domain, extracellular.

The protein belongs to the MtrA family. In terms of assembly, the complex is composed of 8 subunits; MtrA, MtrB, MtrC, MtrD, MtrE, MtrF, MtrG and MtrH. The cofactor is 5-hydroxybenzimidazolylcob(I)amide.

It is found in the cell membrane. It catalyses the reaction 5-methyl-5,6,7,8-tetrahydromethanopterin + coenzyme M + 2 Na(+)(in) = 5,6,7,8-tetrahydromethanopterin + methyl-coenzyme M + 2 Na(+)(out). It participates in one-carbon metabolism; methanogenesis from CO(2); methyl-coenzyme M from 5,10-methylene-5,6,7,8-tetrahydromethanopterin: step 2/2. Its function is as follows. Part of a complex that catalyzes the formation of methyl-coenzyme M and tetrahydromethanopterin from coenzyme M and methyl-tetrahydromethanopterin. This is an energy-conserving, sodium-ion translocating step. The chain is Tetrahydromethanopterin S-methyltransferase subunit A from Methanohalophilus mahii (strain ATCC 35705 / DSM 5219 / SLP).